The sequence spans 430 residues: Tol-Pal system protein TolB (430 aa).

The signal sequence occupies residues 1–21; that stretch reads MKQAFRVALGFLVLWASVLHA.

The protein belongs to the TolB family. The Tol-Pal system is composed of five core proteins: the inner membrane proteins TolA, TolQ and TolR, the periplasmic protein TolB and the outer membrane protein Pal. They form a network linking the inner and outer membranes and the peptidoglycan layer.

The protein resides in the periplasm. In terms of biological role, part of the Tol-Pal system, which plays a role in outer membrane invagination during cell division and is important for maintaining outer membrane integrity. TolB occupies a key intermediary position in the Tol-Pal system because it communicates directly with both membrane-embedded components, Pal in the outer membrane and TolA in the inner membrane. In Yersinia enterocolitica serotype O:8 / biotype 1B (strain NCTC 13174 / 8081), this protein is Tol-Pal system protein TolB.